A 110-amino-acid chain; its full sequence is Small ribosomal subunit protein eS24 (110 aa).

The disordered stretch occupies residues R91–E110. Positions Q97–E110 are enriched in acidic residues.

Belongs to the eukaryotic ribosomal protein eS24 family.

The protein is Small ribosomal subunit protein eS24 of Archaeoglobus fulgidus (strain ATCC 49558 / DSM 4304 / JCM 9628 / NBRC 100126 / VC-16).